A 311-amino-acid polypeptide reads, in one-letter code: Arginine/serine-rich protein 1 (311 aa).

Residues 1-125 (MSTYVNDMWP…RSRSRSRGRS (125 aa)) are disordered. At S12 the chain carries Phosphoserine. Positions 20–31 (STSRSGGSSRLS) are enriched in low complexity. Basic residues predominate over residues 32 to 123 (SRSRSRSFSR…RSRSRSRSRG (92 aa)). Phosphoserine occurs at positions 109 and 111. R135 carries the post-translational modification Omega-N-methylarginine.

Belongs to the RSRP family. Post-translationally, phosphorylated. Phosphorylation at Ser-109 and Ser-111 mediates the interaction with spliceosome proteins.

Its subcellular location is the nucleus. In terms of biological role, probably acts as a spliceosomal factor that contributes to spliceosome assembly and regulates the isoform switching of proteins such as PARP6. In Pongo abelii (Sumatran orangutan), this protein is Arginine/serine-rich protein 1 (RSRP1).